The chain runs to 449 residues: Wilms tumor protein homolog (449 aa).

Residues 49–84 are disordered; that stretch reads YGSLGGPAPPPAPPPPPPPPHSFIKQEPSWGGAEPH. The span at 55 to 69 shows a compositional bias: pro residues; the sequence is PAPPPAPPPPPPPPH. Residues Lys-73 and Lys-177 each participate in a glycyl lysine isopeptide (Lys-Gly) (interchain with G-Cter in SUMO) cross-link. The 9aaTAD motif lies at 236–244; that stretch reads MTWNQMNLG. C2H2-type zinc fingers lie at residues 323–347, 353–377, and 383–405; these read FMCA…SRKH, YQCD…QRRH, and FQCK…TRTH. 2 important for interaction with target DNA regions span residues 367–381 and 393–401; these read SDQL…TGVK and SRSDHLKTH. Positions 408 to 410 match the KTS motif motif; sequence KTS. Residues 414 to 438 form a C2H2-type 4 zinc finger; it reads FSCRWHSCQKKFARSDELVRHHNMH. Residue Lys-444 forms a Glycyl lysine isopeptide (Lys-Gly) (interchain with G-Cter in SUMO2) linkage.

The protein belongs to the EGR C2H2-type zinc-finger protein family. In terms of assembly, interacts with ZNF224 via the zinc-finger region. Interacts with WTAP, AMER1 and SRY. Interacts with RBM4. Homodimer. Interacts with WTIP. Interacts with actively translating polysomes. Detected in nuclear ribonucleoprotein (mRNP) particles. Interacts with U2AF2. Interacts with HNRNPU via the zinc-finger region. Isoform 1 and isoform 3 interacts with CITED2. In terms of tissue distribution, detected in neurons of the embryonic dorsal root ganglion and in Sertoli cells of the adult testis (at protein level). Detected in kidney.

It localises to the nucleus speckle. Its subcellular location is the nucleus. The protein localises to the nucleoplasm. The protein resides in the nucleolus. It is found in the cytoplasm. In terms of biological role, transcription factor that plays an important role in cellular development and cell survival. Recognizes and binds to the DNA sequence 5'-GCG(T/G)GGGCG-3'. Regulates the expression of numerous target genes, including EPO. Plays an essential role for development of the urogenital system. It has a tumor suppressor as well as an oncogenic role in tumor formation. Function may be isoform-specific: isoforms lacking the KTS motif may act as transcription factors. Isoforms containing the KTS motif may bind mRNA and play a role in mRNA metabolism or splicing. Isoform 1 has lower affinity for DNA, and can bind RNA. This chain is Wilms tumor protein homolog (Wt1), found in Mus musculus (Mouse).